A 64-amino-acid chain; its full sequence is Myotoxin-2 (64 aa).

Positions 1–21 (KILYLLFAFLFLAFLSEPGNA) are cleaved as a signal peptide. Cysteines 32 and 51 form a disulfide.

This sequence belongs to the crotamine-myotoxin family. Monomer. Expressed by the venom gland.

Its subcellular location is the secreted. Functionally, cationic peptide that possesses multiple functions. It acts as a cell-penetrating peptide (CPP), and as a potent voltage-gated potassium channel (Kv) inhibitor. It exhibits antimicrobial activities, hind limb paralysis, and severe muscle necrosis by a non-enzymatic mechanism. The protein is Myotoxin-2 of Crotalus durissus terrificus (South American rattlesnake).